A 345-amino-acid chain; its full sequence is Acetylserotonin O-methyltransferase (345 aa).

Residues Tyr147, Trp164, Asp210, 235-237, and Arg252 contribute to the S-adenosyl-L-methionine site; that span reads GDF. The Proton donor/acceptor role is filled by His255. The substrate site is built by Asp256, Asn302, and Gln306.

It belongs to the class I-like SAM-binding methyltransferase superfamily. Cation-independent O-methyltransferase family. In terms of assembly, homodimer. Highly expressed in pineal gland. In the retina, 10- to 100-fold lower expression compared to pineal gland, if any.

The enzyme catalyses N-acetylserotonin + S-adenosyl-L-methionine = melatonin + S-adenosyl-L-homocysteine + H(+). The protein operates within aromatic compound metabolism; melatonin biosynthesis; melatonin from serotonin: step 1/2. Functionally, catalyzes the transfer of a methyl group onto N-acetylserotonin, producing melatonin (N-acetyl-5-methoxytryptamine). This is Acetylserotonin O-methyltransferase (ASMT) from Macaca mulatta (Rhesus macaque).